Reading from the N-terminus, the 553-residue chain is Glutamate--tRNA ligase (553 aa).

Residues 41-51 carry the 'HIGH' region motif; that stretch reads PSPTGFQHIGG. The short motif at 293-297 is the 'KMSKS' region element; the sequence is KLSKR. K296 lines the ATP pocket.

The protein belongs to the class-I aminoacyl-tRNA synthetase family. Glutamate--tRNA ligase type 1 subfamily. Monomer.

The protein localises to the cytoplasm. The enzyme catalyses tRNA(Glu) + L-glutamate + ATP = L-glutamyl-tRNA(Glu) + AMP + diphosphate. Functionally, catalyzes the attachment of glutamate to tRNA(Glu) in a two-step reaction: glutamate is first activated by ATP to form Glu-AMP and then transferred to the acceptor end of tRNA(Glu). In Clostridium beijerinckii (strain ATCC 51743 / NCIMB 8052) (Clostridium acetobutylicum), this protein is Glutamate--tRNA ligase.